Here is a 552-residue protein sequence, read N- to C-terminus: Steroid transmembrane transporter SLC22A24 (552 aa).

Helical transmembrane passes span 16 to 36, 146 to 166, 174 to 194, 204 to 224, 235 to 255, 260 to 280, 349 to 369, 380 to 400, 407 to 427, 436 to 456, 473 to 493, and 495 to 515; these read FQILQLAFLCIANILLFPHIL, SVVQSLFMAGSLLGSVIFGYL, MICSWCLLQLAISDTCAAFAP, FLAGSCVMTIMGHSFLLVIEW, TLLLCASSVGQMLLGGLAFVI, TLQLTVSIPIFVIFLSSRWLV, IVLYLGFVRLAVSVPLYGLIF, LFQVLFGAITATARFVALLVM, ISQVLFLLPVGLFILVNTFLD, ILATLGAGVLCIATTSGSVHF, ILFSRIGAALAPLLMIFVGFS, and YLPWITYGVFPILAGLVVLLL.

It belongs to the major facilitator (TC 2.A.1) superfamily. Organic cation transporter (TC 2.A.1.19) family.

Its subcellular location is the cell membrane. It carries out the reaction estrone 3-sulfate(out) + glutarate(in) = estrone 3-sulfate(in) + glutarate(out). It catalyses the reaction 17beta-estradiol 17-O-(beta-D-glucuronate)(out) + glutarate(in) = 17beta-estradiol 17-O-(beta-D-glucuronate)(in) + glutarate(out). The enzyme catalyses 5alpha-androstane-3alpha,17beta-diol 3-O-(beta-D-glucuronate)(out) + glutarate(in) = 5alpha-androstane-3alpha,17beta-diol 3-O-(beta-D-glucuronate)(in) + glutarate(out). The catalysed reaction is dehydroepiandrosterone 3-sulfate(out) + glutarate(in) = dehydroepiandrosterone 3-sulfate(in) + glutarate(out). It carries out the reaction glutarate(in) + succinate(out) = glutarate(out) + succinate(in). Functionally, renal transmembrane organic anion/dicarboxylate exchanger that participates in the reabsorption of conjugated steroids, as well as bile acids, driven by an outward gradient of dicarboxylates such as glutarate or succinate. Transports androstanediol glucuronide (5alpha-androstane-3alpha,17beta-diol 3-O-(beta-D-glucuronate)), estrone 3-sulfate, and estradiol-17-glucuronide (17beta-estradiol 17-O-(beta-D-glucuronate)), but not taurocholate. This is Steroid transmembrane transporter SLC22A24 from Microcebus murinus (Gray mouse lemur).